We begin with the raw amino-acid sequence, 193 residues long: Dual-action ribosomal maturation protein DarP (193 aa).

It belongs to the DarP family.

It localises to the cytoplasm. Functionally, member of a network of 50S ribosomal subunit biogenesis factors which assembles along the 30S-50S interface, preventing incorrect 23S rRNA structures from forming. Promotes peptidyl transferase center (PTC) maturation. This Vibrio cholerae serotype O1 (strain ATCC 39315 / El Tor Inaba N16961) protein is Dual-action ribosomal maturation protein DarP.